Here is a 247-residue protein sequence, read N- to C-terminus: Protein IRON-RELATED TRANSCRIPTION FACTOR 2 (247 aa).

The short motif at 68 to 75 (HRKLSHNA) is the Nuclear localization signal element. Positions 68 to 81 (HRKLSHNAYERDRR) are basic motif. Positions 68–119 (HRKLSHNAYERDRRKQLNELYSSLRALLPDADHTKLSIPTTVSRVLKYIPEL) constitute a bHLH domain. Residues 82–119 (KQLNELYSSLRALLPDADHTKLSIPTTVSRVLKYIPEL) are helix-loop-helix motif.

This sequence belongs to the bHLH protein family. Forms homodimers. Interacts with BHLH156 in the nucleus. As to expression, expressed constitutively at low levels in the roots. Also observed in flowers, developing seeds, embryos and vascular bundles.

It localises to the nucleus. It is found in the cytoplasm. In terms of biological role, transcription activator that binds to the DNA motif 5'-CACGTGG-3' in the promoter of iron (Fe) deficiency-inducible genes as well as of genes involved in iron homeostasis, thus contributing to basal tolerance to iron deficiency, iron uptake from soil and iron transport, particularly during seed maturation and germination. Promotes the accumulation of mugineic acid family phytosiderophores (MAs). Required for ethylene-mediated signaling during iron deficiency responses. Improves growth and yield, especially in calcareous soil with low iron availability. Promotes iron concentration in shoots and grain. This chain is Protein IRON-RELATED TRANSCRIPTION FACTOR 2, found in Oryza sativa subsp. japonica (Rice).